A 100-amino-acid polypeptide reads, in one-letter code: Small ribosomal subunit protein uS14 (100 aa).

Belongs to the universal ribosomal protein uS14 family. In terms of assembly, part of the 30S ribosomal subunit. Contacts proteins S3 and S10.

Its function is as follows. Binds 16S rRNA, required for the assembly of 30S particles and may also be responsible for determining the conformation of the 16S rRNA at the A site. The chain is Small ribosomal subunit protein uS14 from Acaryochloris marina (strain MBIC 11017).